The primary structure comprises 186 residues: EF-hand protein 5 (186 aa).

The tract at residues 1–23 is disordered; sequence MSRSKEVSPNLSQQKRGDVRSAG. EF-hand domains follow at residues 41–76, 77–112, 113–148, and 149–186; these read SAEL…GLHT, SEEE…GIDE, ASIA…SGEH, and SSAE…LNKM. Glu98, Asp126, and Thr130 together coordinate Ca(2+).

The protein is EF-hand protein 5 of Leishmania tarentolae (Sauroleishmania tarentolae).